Here is a 606-residue protein sequence, read N- to C-terminus: 4-hydroxy-3-methylbut-2-en-1-yl diphosphate synthase (flavodoxin) (606 aa).

Positions 513, 516, 547, and 554 each coordinate [4Fe-4S] cluster.

It belongs to the IspG family. It depends on [4Fe-4S] cluster as a cofactor.

The catalysed reaction is (2E)-4-hydroxy-3-methylbut-2-enyl diphosphate + oxidized [flavodoxin] + H2O + 2 H(+) = 2-C-methyl-D-erythritol 2,4-cyclic diphosphate + reduced [flavodoxin]. Its pathway is isoprenoid biosynthesis; isopentenyl diphosphate biosynthesis via DXP pathway; isopentenyl diphosphate from 1-deoxy-D-xylulose 5-phosphate: step 5/6. Functionally, converts 2C-methyl-D-erythritol 2,4-cyclodiphosphate (ME-2,4cPP) into 1-hydroxy-2-methyl-2-(E)-butenyl 4-diphosphate. The chain is 4-hydroxy-3-methylbut-2-en-1-yl diphosphate synthase (flavodoxin) from Chlamydia abortus (strain DSM 27085 / S26/3) (Chlamydophila abortus).